We begin with the raw amino-acid sequence, 288 residues long: Thiamine-monophosphate kinase (288 aa).

The Mg(2+) site is built by Asp-20, Thr-30, and Asp-32. Asp-39 is a binding site for substrate. Asp-60 and Asp-107 together coordinate Mg(2+). ATP contacts are provided by residues 106 to 107 and Arg-130; that span reads GD. Residue Asp-188 coordinates Mg(2+). Position 190 (Ser-190) interacts with ATP. Residue Asp-191 participates in Mg(2+) binding. Residue Trp-286 coordinates substrate.

It belongs to the thiamine-monophosphate kinase family.

The catalysed reaction is thiamine phosphate + ATP = thiamine diphosphate + ADP. It functions in the pathway cofactor biosynthesis; thiamine diphosphate biosynthesis; thiamine diphosphate from thiamine phosphate: step 1/1. Its function is as follows. Catalyzes the ATP-dependent phosphorylation of thiamine-monophosphate (TMP) to form thiamine-pyrophosphate (TPP), the active form of vitamin B1. The chain is Thiamine-monophosphate kinase from Halobacterium salinarum (strain ATCC 700922 / JCM 11081 / NRC-1) (Halobacterium halobium).